A 103-amino-acid polypeptide reads, in one-letter code: Large ribosomal subunit protein P2 (103 aa).

The tract at residues 64 to 103 (LAISSSQKSEPAQPADTAESTQATENKEEEDEDFDIFAAF) is disordered. Positions 90-103 (KEEEDEDFDIFAAF) are enriched in acidic residues.

It belongs to the eukaryotic ribosomal protein P1/P2 family. In terms of assembly, component of the large ribosomal subunit.

It is found in the cytoplasm. In terms of biological role, plays an important role in the elongation step of protein synthesis. The polypeptide is Large ribosomal subunit protein P2 (RPP2A) (Encephalitozoon cuniculi (strain GB-M1) (Microsporidian parasite)).